We begin with the raw amino-acid sequence, 262 residues long: Putative ABC transporter ATP-binding protein SAV_3608 (262 aa).

The ABC transporter domain occupies 18-248; sequence LDVAGLAFAY…DTLMRAHRLE (231 aa). Residue 51–58 coordinates ATP; the sequence is GPNGAGKT.

The protein belongs to the ABC transporter superfamily.

It localises to the cell membrane. Its function is as follows. Probably part of an ABC transporter complex. Responsible for energy coupling to the transport system. The sequence is that of Putative ABC transporter ATP-binding protein SAV_3608 from Streptomyces avermitilis (strain ATCC 31267 / DSM 46492 / JCM 5070 / NBRC 14893 / NCIMB 12804 / NRRL 8165 / MA-4680).